A 547-amino-acid polypeptide reads, in one-letter code: MPSMRVTTDTWPRRAAQEPLLLLLLRSSLMKSASLQALNPNRAMAAMGRSVRVVLDSSVLLDPSGVTAEEEEVVVALRPGAEALLRRLRYSNLRVAICHPEGLPTNESGFLEKTAKLYSFGYMPLTSPSGSNLLNELMLEWSGTNFCFYVTSGVHEGLLSELQNHNWEVIAMGNEDVIKNSGVIHISMLQELLITLATSIKKEIGNSSAFVVGYVMKQSREEDFAKRGAFPIYPSKNDLIFVPLSFELPLASQLQEVDLVLHKITDEIINIDPNSSISFPKGISFSPGMSEIIRFVEEHCDFCVIDPFKNIYPLLDRIQIQEILIRLEGLSAEGRPKLRAPCFLKIESFCGSELQKQLAEAKLSFPLIVKPQVACGVADAHNMALIFKIEEFSNLSVPLPAILQEYIDHGSKIFKFYAIGDKIFHAIKNSMPNASHLKSSSGGKPLTFNSLKTLPVATKEQLLQNEVQDSKLLDINLVEEAAKLLKELLGLTIFGFDVVVQESSGDHVIVDLNYLPSFKEVPDNVAMPAFWDAIKQSYESRKQMTQT.

A 1D-myo-inositol 1,3,4-trisphosphate-binding site is contributed by Lys263. Arg317 and Lys370 together coordinate ATP. An ATP-grasp domain is found at 327–539; that stretch reads LEGLSAEGRP…FWDAIKQSYE (213 aa). The 1D-myo-inositol 1,3,4-trisphosphate site is built by His381 and Lys415. ATP is bound by residues 404 to 415, Ser430, and Ser450; that span reads QEYIDHGSKIFK. The Mg(2+) site is built by Asp497, Asp511, and Asn513. Residues Asn513 and Ser517 each coordinate 1D-myo-inositol 1,3,4-trisphosphate.

It belongs to the ITPK1 family. As to quaternary structure, monomer. It depends on Mg(2+) as a cofactor. Highly expressed in embryos and at lower levels in roots, leaves, flowers and anthers.

It catalyses the reaction 1D-myo-inositol 3,4,5,6-tetrakisphosphate + ATP = 1D-myo-inositol 1,3,4,5,6-pentakisphosphate + ADP + H(+). The enzyme catalyses 1D-myo-inositol 1,3,4-trisphosphate + ATP = 1D-myo-inositol 1,3,4,5-tetrakisphosphate + ADP + H(+). The catalysed reaction is 1D-myo-inositol 1,3,4-trisphosphate + ATP = 1D-myo-inositol 1,3,4,6-tetrakisphosphate + ADP + H(+). In terms of biological role, kinase that can phosphorylate various inositol polyphosphate such as Ins(3,4,5,6)P4 or Ins(1,3,4)P3 and participates in phytic acid biosynthesis in developing seeds. Phytic acid is the primary storage form of phosphorus in cereal grains and other plant seeds. This Oryza sativa subsp. japonica (Rice) protein is Inositol-tetrakisphosphate 1-kinase 6 (ITPK6).